The chain runs to 478 residues: D-ribulose kinase (478 aa).

Residues 1 to 38 (MLILRQFQISSFELFQSPKQTGFYSSSRSVPLPRTRFY) constitute a chloroplast transit peptide. Residues aspartate 60, 64–67 (SGGR), and aspartate 278 each bind substrate. Residues serine 300, glycine 338, and 433 to 437 (GGAKN) each bind ATP.

This sequence belongs to the FGGY kinase family. A divalent metal cation serves as cofactor.

The protein resides in the plastid. It localises to the chloroplast. The catalysed reaction is D-ribulose + ATP = D-ribulose 5-phosphate + ADP + H(+). Its function is as follows. Exhibits ATP hydrolysis without substrate. Can phosphorylate D-ribulose with low efficiency. The polypeptide is D-ribulose kinase (Arabidopsis thaliana (Mouse-ear cress)).